The chain runs to 496 residues: Cobyric acid synthase (496 aa).

The GATase cobBQ-type domain maps to 252–442 (DLAVAVIRLP…LHGCFDSDTY (191 aa)). C333 functions as the Nucleophile in the catalytic mechanism. H434 is an active-site residue.

The protein belongs to the CobB/CobQ family. CobQ subfamily.

It participates in cofactor biosynthesis; adenosylcobalamin biosynthesis. Its function is as follows. Catalyzes amidations at positions B, D, E, and G on adenosylcobyrinic A,C-diamide. NH(2) groups are provided by glutamine, and one molecule of ATP is hydrogenolyzed for each amidation. The polypeptide is Cobyric acid synthase (Desulforudis audaxviator (strain MP104C)).